The sequence spans 276 residues: Ubiquinone biosynthesis protein coq11, mitochondrial (276 aa).

This sequence belongs to the NAD(P)-dependent epimerase/dehydratase family.

The protein localises to the mitochondrion. Its function is as follows. Acts in the coenzyme Q biosynthetic pathway. The sequence is that of Ubiquinone biosynthesis protein coq11, mitochondrial from Schizosaccharomyces pombe (strain 972 / ATCC 24843) (Fission yeast).